Consider the following 280-residue polypeptide: Diaminopimelate epimerase (280 aa).

Residues asparagine 13 and asparagine 66 each contribute to the substrate site. Catalysis depends on cysteine 75, which acts as the Proton donor. Residues 76 to 77, asparagine 162, asparagine 195, and 213 to 214 contribute to the substrate site; these read GN and ER. The Proton acceptor role is filled by cysteine 222. Substrate is bound at residue 223–224; that stretch reads GT.

Belongs to the diaminopimelate epimerase family. In terms of assembly, homodimer.

Its subcellular location is the cytoplasm. The enzyme catalyses (2S,6S)-2,6-diaminopimelate = meso-2,6-diaminopimelate. Its pathway is amino-acid biosynthesis; L-lysine biosynthesis via DAP pathway; DL-2,6-diaminopimelate from LL-2,6-diaminopimelate: step 1/1. Functionally, catalyzes the stereoinversion of LL-2,6-diaminopimelate (L,L-DAP) to meso-diaminopimelate (meso-DAP), a precursor of L-lysine and an essential component of the bacterial peptidoglycan. In Synechococcus elongatus (strain ATCC 33912 / PCC 7942 / FACHB-805) (Anacystis nidulans R2), this protein is Diaminopimelate epimerase.